A 335-amino-acid polypeptide reads, in one-letter code: Holliday junction branch migration complex subunit RuvB (335 aa).

Residues 1–183 (MDERIISSET…FGVIDHLEFY (183 aa)) form a large ATPase domain (RuvB-L) region. ATP contacts are provided by residues Leu-22, Arg-23, Gly-64, Lys-67, Thr-68, Thr-69, 130–132 (EDY), Arg-173, Tyr-183, and Arg-220. Thr-68 contributes to the Mg(2+) binding site. Residues 184–254 (TEEQLTEIVL…LAKEALTLLQ (71 aa)) form a small ATPAse domain (RuvB-S) region. The tract at residues 257–335 (PRGLDTIDQK…HLGISYEKEV (79 aa)) is head domain (RuvB-H). DNA is bound by residues Arg-293, Arg-312, and Arg-317.

The protein belongs to the RuvB family. As to quaternary structure, homohexamer. Forms an RuvA(8)-RuvB(12)-Holliday junction (HJ) complex. HJ DNA is sandwiched between 2 RuvA tetramers; dsDNA enters through RuvA and exits via RuvB. An RuvB hexamer assembles on each DNA strand where it exits the tetramer. Each RuvB hexamer is contacted by two RuvA subunits (via domain III) on 2 adjacent RuvB subunits; this complex drives branch migration. In the full resolvosome a probable DNA-RuvA(4)-RuvB(12)-RuvC(2) complex forms which resolves the HJ.

Its subcellular location is the cytoplasm. The enzyme catalyses ATP + H2O = ADP + phosphate + H(+). In terms of biological role, the RuvA-RuvB-RuvC complex processes Holliday junction (HJ) DNA during genetic recombination and DNA repair, while the RuvA-RuvB complex plays an important role in the rescue of blocked DNA replication forks via replication fork reversal (RFR). RuvA specifically binds to HJ cruciform DNA, conferring on it an open structure. The RuvB hexamer acts as an ATP-dependent pump, pulling dsDNA into and through the RuvAB complex. RuvB forms 2 homohexamers on either side of HJ DNA bound by 1 or 2 RuvA tetramers; 4 subunits per hexamer contact DNA at a time. Coordinated motions by a converter formed by DNA-disengaged RuvB subunits stimulates ATP hydrolysis and nucleotide exchange. Immobilization of the converter enables RuvB to convert the ATP-contained energy into a lever motion, pulling 2 nucleotides of DNA out of the RuvA tetramer per ATP hydrolyzed, thus driving DNA branch migration. The RuvB motors rotate together with the DNA substrate, which together with the progressing nucleotide cycle form the mechanistic basis for DNA recombination by continuous HJ branch migration. Branch migration allows RuvC to scan DNA until it finds its consensus sequence, where it cleaves and resolves cruciform DNA. The chain is Holliday junction branch migration complex subunit RuvB from Listeria welshimeri serovar 6b (strain ATCC 35897 / DSM 20650 / CCUG 15529 / CIP 8149 / NCTC 11857 / SLCC 5334 / V8).